Consider the following 498-residue polypeptide: Glycerol kinase (498 aa).

Position 11 (threonine 11) interacts with ADP. 3 residues coordinate ATP: threonine 11, serine 12, and serine 13. Threonine 11 is a binding site for sn-glycerol 3-phosphate. Arginine 15 contacts ADP. Sn-glycerol 3-phosphate contacts are provided by arginine 81, glutamate 82, tyrosine 133, and aspartate 242. Residues arginine 81, glutamate 82, tyrosine 133, aspartate 242, and glutamine 243 each coordinate glycerol. Positions 264 and 307 each coordinate ADP. 4 residues coordinate ATP: threonine 264, glycine 307, glutamine 311, and glycine 412. Positions 412 and 416 each coordinate ADP.

This sequence belongs to the FGGY kinase family.

It catalyses the reaction glycerol + ATP = sn-glycerol 3-phosphate + ADP + H(+). Its pathway is polyol metabolism; glycerol degradation via glycerol kinase pathway; sn-glycerol 3-phosphate from glycerol: step 1/1. Inhibited by fructose 1,6-bisphosphate (FBP). Key enzyme in the regulation of glycerol uptake and metabolism. Catalyzes the phosphorylation of glycerol to yield sn-glycerol 3-phosphate. This chain is Glycerol kinase, found in Acidovorax sp. (strain JS42).